A 522-amino-acid polypeptide reads, in one-letter code: MKFSAGAVLSWSSLLLASSVFAQQEAVAPEDSAVVKLATDSFNEYIQSHDLVLAEFFAPWCGHCKNMAPEYVKAAETLVEKNITLAQIDCTENQDLCMEHNIPGFPSLKIFKNSDVNNSIDYEGPRTAEAIVQFMIKQSQPAVAVVADLPAYLANETFVTPVIVQSGKIDADFNATFYSMANKHFNDYDFVSAENADDDFKLSIYLPSAMDEPVVYNGKKADIADADVFEKWLQVEALPYFGEIDGSVFAQYVESGLPLGYLFYNDEEELEEYKPLFTELAKKNRGLMNFVSIDARKFGRHAGNLNMKEQFPLFAIHDMTEDLKYGLPQLSEEAFDELSDKIVLESKAIESLVKDFLKGDASPIVKSQEIFENQDSSVFQLVGKNHDEIVNDPKKDVLVLYYAPWCGHCKRLAPTYQELADTYANATSDVLIAKLDHTENDVRGVVIEGYPTIVLYPGGKKSESVVYQGSRSLDSLFDFIKENGHFDVDGKALYEEAQEKAAEEADADAELADEEDAIHDEL.

The segment at residues 1–28 (MKFSAGAVLSWSSLLLASSVFAQQEAVA) is a signal peptide (or 22). The Thioredoxin 1 domain occupies 29–141 (PEDSAVVKLA…VQFMIKQSQP (113 aa)). Catalysis depends on nucleophile residues C61 and C64. An intrachain disulfide couples C61 to C64. N-linked (GlcNAc...) asparagine glycans are attached at residues N82, N117, N155, and N174. Positions 356 to 485 (FLKGDASPIV…LFDFIKENGH (130 aa)) constitute a Thioredoxin 2 domain. Residues C406 and C409 each act as nucleophile in the active site. An intrachain disulfide couples C406 to C409. N425 is a glycosylation site (N-linked (GlcNAc...) asparagine). Positions 497-522 (AQEKAAEEADADAELADEEDAIHDEL) are disordered. Positions 504 to 522 (EADADAELADEEDAIHDEL) are enriched in acidic residues. The short motif at 519–522 (HDEL) is the Prevents secretion from ER element.

This sequence belongs to the protein disulfide isomerase family. As to quaternary structure, interacts with EPS1, KAR2 and MNL1. Post-translationally, the N-terminus is blocked.

It localises to the endoplasmic reticulum lumen. The catalysed reaction is Catalyzes the rearrangement of -S-S- bonds in proteins.. Protein disulfide isomerase of ER lumen required for formation of disulfide bonds in secretory and cell-surface proteins and which unscrambles non-native disulfide bonds. Forms a complex with MNL1 to process unfolded protein-bound Man8GlcNAc2 oligosaccharides to Man7GlcNAc2, promoting degradation in unfolded protein response. This is Protein disulfide-isomerase (PDI1) from Saccharomyces cerevisiae (strain ATCC 204508 / S288c) (Baker's yeast).